Here is a 66-residue protein sequence, read N- to C-terminus: Cold shock-like protein (66 aa).

The CSD domain occupies 3–62 (GKVKWFDSKKGYGFITKDEGGDVFVHWSAIEMEGFKTLKEGQVVEFEIQEGKKGPQAAHV).

In terms of assembly, monomer.

It localises to the cytoplasm. This Thermotoga maritima (strain ATCC 43589 / DSM 3109 / JCM 10099 / NBRC 100826 / MSB8) protein is Cold shock-like protein (csp).